We begin with the raw amino-acid sequence, 165 residues long: SsrA-binding protein (165 aa).

The span at 135–158 shows a compositional bias: basic and acidic residues; that stretch reads QAHDKRQDMARRDAQREVTRELGR. Positions 135–165 are disordered; sequence QAHDKRQDMARRDAQREVTRELGRRVKGMTS.

It belongs to the SmpB family.

The protein resides in the cytoplasm. Required for rescue of stalled ribosomes mediated by trans-translation. Binds to transfer-messenger RNA (tmRNA), required for stable association of tmRNA with ribosomes. tmRNA and SmpB together mimic tRNA shape, replacing the anticodon stem-loop with SmpB. tmRNA is encoded by the ssrA gene; the 2 termini fold to resemble tRNA(Ala) and it encodes a 'tag peptide', a short internal open reading frame. During trans-translation Ala-aminoacylated tmRNA acts like a tRNA, entering the A-site of stalled ribosomes, displacing the stalled mRNA. The ribosome then switches to translate the ORF on the tmRNA; the nascent peptide is terminated with the 'tag peptide' encoded by the tmRNA and targeted for degradation. The ribosome is freed to recommence translation, which seems to be the essential function of trans-translation. This is SsrA-binding protein from Mycolicibacterium vanbaalenii (strain DSM 7251 / JCM 13017 / BCRC 16820 / KCTC 9966 / NRRL B-24157 / PYR-1) (Mycobacterium vanbaalenii).